Here is a 251-residue protein sequence, read N- to C-terminus: Imidazole glycerol phosphate synthase subunit HisF (251 aa).

Active-site residues include Asp-12 and Asp-131.

The protein belongs to the HisA/HisF family. Heterodimer of HisH and HisF.

The protein localises to the cytoplasm. The catalysed reaction is 5-[(5-phospho-1-deoxy-D-ribulos-1-ylimino)methylamino]-1-(5-phospho-beta-D-ribosyl)imidazole-4-carboxamide + L-glutamine = D-erythro-1-(imidazol-4-yl)glycerol 3-phosphate + 5-amino-1-(5-phospho-beta-D-ribosyl)imidazole-4-carboxamide + L-glutamate + H(+). It participates in amino-acid biosynthesis; L-histidine biosynthesis; L-histidine from 5-phospho-alpha-D-ribose 1-diphosphate: step 5/9. In terms of biological role, IGPS catalyzes the conversion of PRFAR and glutamine to IGP, AICAR and glutamate. The HisF subunit catalyzes the cyclization activity that produces IGP and AICAR from PRFAR using the ammonia provided by the HisH subunit. The protein is Imidazole glycerol phosphate synthase subunit HisF of Helicobacter hepaticus (strain ATCC 51449 / 3B1).